Here is a 311-residue protein sequence, read N- to C-terminus: Deacetoxycephalosporin C synthase (311 aa).

Residues D154–P267 form the Fe2OG dioxygenase domain.

Belongs to the iron/ascorbate-dependent oxidoreductase family. It depends on Fe cation as a cofactor. The cofactor is L-ascorbate.

The enzyme catalyses penicillin N + 2-oxoglutarate + O2 = deacetoxycephalosporin C + succinate + CO2 + H2O. It participates in antibiotic biosynthesis; cephalosporin C biosynthesis. Catalyzes the step from penicillin N to deacetoxy-cephalosporin C. This is Deacetoxycephalosporin C synthase (cefE) from Streptomyces clavuligerus.